The primary structure comprises 193 residues: Anthranilate synthase component 2 (193 aa).

The Glutamine amidotransferase type-1 domain occupies 3–193 (NILFLDNFDS…QQSIEWLLNR (191 aa)). L-glutamine is bound at residue 57 to 59 (GPG). Residue C84 is the Nucleophile; for GATase activity of the active site. Residues Q88 and 134 to 135 (SL) contribute to the L-glutamine site. Active-site for GATase activity residues include H170 and E172.

Heterotetramer consisting of two non-identical subunits: a beta subunit (TrpG) and a large alpha subunit (TrpE).

It catalyses the reaction chorismate + L-glutamine = anthranilate + pyruvate + L-glutamate + H(+). Its pathway is amino-acid biosynthesis; L-tryptophan biosynthesis; L-tryptophan from chorismate: step 1/5. In terms of biological role, part of a heterotetrameric complex that catalyzes the two-step biosynthesis of anthranilate, an intermediate in the biosynthesis of L-tryptophan. In the first step, the glutamine-binding beta subunit (TrpG) of anthranilate synthase (AS) provides the glutamine amidotransferase activity which generates ammonia as a substrate that, along with chorismate, is used in the second step, catalyzed by the large alpha subunit of AS (TrpE) to produce anthranilate. In the absence of TrpG, TrpE can synthesize anthranilate directly from chorismate and high concentrations of ammonia. This is Anthranilate synthase component 2 (trpG) from Haemophilus influenzae (strain ATCC 51907 / DSM 11121 / KW20 / Rd).